A 95-amino-acid chain; its full sequence is Aspartyl/glutamyl-tRNA(Asn/Gln) amidotransferase subunit C (95 aa).

The protein belongs to the GatC family. Heterotrimer of A, B and C subunits.

The enzyme catalyses L-glutamyl-tRNA(Gln) + L-glutamine + ATP + H2O = L-glutaminyl-tRNA(Gln) + L-glutamate + ADP + phosphate + H(+). The catalysed reaction is L-aspartyl-tRNA(Asn) + L-glutamine + ATP + H2O = L-asparaginyl-tRNA(Asn) + L-glutamate + ADP + phosphate + 2 H(+). Allows the formation of correctly charged Asn-tRNA(Asn) or Gln-tRNA(Gln) through the transamidation of misacylated Asp-tRNA(Asn) or Glu-tRNA(Gln) in organisms which lack either or both of asparaginyl-tRNA or glutaminyl-tRNA synthetases. The reaction takes place in the presence of glutamine and ATP through an activated phospho-Asp-tRNA(Asn) or phospho-Glu-tRNA(Gln). This Rhodopseudomonas palustris (strain BisB18) protein is Aspartyl/glutamyl-tRNA(Asn/Gln) amidotransferase subunit C.